The following is a 289-amino-acid chain: ATP phosphoribosyltransferase (289 aa).

It belongs to the ATP phosphoribosyltransferase family. Long subfamily. Requires Mg(2+) as cofactor.

It localises to the cytoplasm. It carries out the reaction 1-(5-phospho-beta-D-ribosyl)-ATP + diphosphate = 5-phospho-alpha-D-ribose 1-diphosphate + ATP. It participates in amino-acid biosynthesis; L-histidine biosynthesis; L-histidine from 5-phospho-alpha-D-ribose 1-diphosphate: step 1/9. Its activity is regulated as follows. Feedback inhibited by histidine. Its function is as follows. Catalyzes the condensation of ATP and 5-phosphoribose 1-diphosphate to form N'-(5'-phosphoribosyl)-ATP (PR-ATP). Has a crucial role in the pathway because the rate of histidine biosynthesis seems to be controlled primarily by regulation of HisG enzymatic activity. The polypeptide is ATP phosphoribosyltransferase (Solibacter usitatus (strain Ellin6076)).